We begin with the raw amino-acid sequence, 573 residues long: DNA ligase (573 aa).

E250 provides a ligand contact to ATP. K252 acts as the N6-AMP-lysine intermediate in catalysis. The ATP site is built by R257, R272, E301, F342, R432, and K438.

This sequence belongs to the ATP-dependent DNA ligase family. It depends on Mg(2+) as a cofactor.

The enzyme catalyses ATP + (deoxyribonucleotide)n-3'-hydroxyl + 5'-phospho-(deoxyribonucleotide)m = (deoxyribonucleotide)n+m + AMP + diphosphate.. DNA ligase that seals nicks in double-stranded DNA during DNA replication, DNA recombination and DNA repair. The protein is DNA ligase of Methanococcus maripaludis (strain C5 / ATCC BAA-1333).